Consider the following 503-residue polypeptide: ATP synthase subunit alpha (503 aa).

170-177 (GDRQTGKT) serves as a coordination point for ATP.

As to quaternary structure, F-type ATPases have 2 components, CF(1) - the catalytic core - and CF(0) - the membrane proton channel. CF(1) has five subunits: alpha(3), beta(3), gamma(1), delta(1), epsilon(1). CF(0) has four main subunits: a(1), b(1), b'(1) and c(9-12).

It localises to the cellular thylakoid membrane. It catalyses the reaction ATP + H2O + 4 H(+)(in) = ADP + phosphate + 5 H(+)(out). Its activity is regulated as follows. Inhibited by dicyclohexylcarbodiimide. In terms of biological role, produces ATP from ADP in the presence of a proton gradient across the membrane. The alpha chain is a regulatory subunit. Its function is as follows. The complex from the organism is particularly stable to disruption and remains functional after 6 hrs at 55 degrees Celsius. This is ATP synthase subunit alpha from Thermosynechococcus vestitus (strain NIES-2133 / IAM M-273 / BP-1).